A 232-amino-acid polypeptide reads, in one-letter code: 7-cyano-7-deazaguanine synthase (232 aa).

Position 7–17 (7–17) interacts with ATP; it reads CSGGLDSVSLA. Cysteine 185, cysteine 193, cysteine 196, and cysteine 199 together coordinate Zn(2+).

The protein belongs to the QueC family. It depends on Zn(2+) as a cofactor.

The catalysed reaction is 7-carboxy-7-deazaguanine + NH4(+) + ATP = 7-cyano-7-deazaguanine + ADP + phosphate + H2O + H(+). It functions in the pathway purine metabolism; 7-cyano-7-deazaguanine biosynthesis. In terms of biological role, catalyzes the ATP-dependent conversion of 7-carboxy-7-deazaguanine (CDG) to 7-cyano-7-deazaguanine (preQ(0)). This Brucella abortus (strain S19) protein is 7-cyano-7-deazaguanine synthase.